The primary structure comprises 168 residues: Group IIF secretory phospholipase A2 (168 aa).

The signal sequence occupies residues 1–20 (MKKFFAIAVLAGSVVTTAHS). 7 disulfides stabilise this stretch: Cys46–Cys138, Cys48–Cys64, Cys63–Cys120, Cys69–Cys145, Cys70–Cys113, Cys79–Cys106, and Cys98–Cys111. Residues Tyr47, Gly49, and Gly51 each contribute to the Ca(2+) site. His67 is a catalytic residue. Residue Asp68 participates in Ca(2+) binding. 2 N-linked (GlcNAc...) asparagine glycosylation sites follow: Asn92 and Asn102. The active site involves Asp114. Residues 139–168 (QGPTPNCSIYDPYPEEVTCGHGLPATPVST) form a required for localization on the plasma membrane region. Residue Asn144 is glycosylated (N-linked (GlcNAc...) asparagine).

Belongs to the phospholipase A2 family. It depends on Ca(2+) as a cofactor. Strongly expressed in testis.

Its subcellular location is the secreted. The protein resides in the cell membrane. The catalysed reaction is a 1,2-diacyl-sn-glycero-3-phosphocholine + H2O = a 1-acyl-sn-glycero-3-phosphocholine + a fatty acid + H(+). It catalyses the reaction 1-hexadecanoyl-2-(9Z-octadecenoyl)-sn-glycero-3-phospho-(1'-sn-glycerol) + H2O = 1-hexadecanoyl-sn-glycero-3-phospho-(1'-sn-glycerol) + (9Z)-octadecenoate + H(+). The enzyme catalyses 1-hexadecanoyl-2-(9Z,12Z-octadecadienoyl)-sn-glycero-3-phosphoethanolamine + H2O = 1-hexadecanoyl-sn-glycero-3-phosphoethanolamine + (9Z,12Z)-octadecadienoate + H(+). It carries out the reaction 1-hexadecanoyl-2-(5Z,8Z,11Z,14Z-eicosatetraenoyl)-sn-glycero-3-phosphoethanolamine + H2O = 1-hexadecanoyl-sn-glycero-3-phosphoethanolamine + (5Z,8Z,11Z,14Z)-eicosatetraenoate + H(+). The catalysed reaction is 1-hexadecanoyl-2-(9Z-octadecenoyl)-sn-glycero-3-phosphocholine + H2O = 1-hexadecanoyl-sn-glycero-3-phosphocholine + (9Z)-octadecenoate + H(+). It catalyses the reaction 1-hexadecanoyl-2-(9Z-octadecenoyl)-sn-glycero-3-phospho-L-serine + H2O = 1-hexadecanoyl-sn-glycero-3-phospho-L-serine + (9Z)-octadecenoate + H(+). In terms of biological role, secretory calcium-dependent phospholipase A2 that primarily targets extracellular phospholipids. Hydrolyzes the ester bond of the fatty acyl group attached at the sn-2 position of phospholipids (phospholipase A2 activity), the catalytic efficiency decreasing in the following order: phosphatidylglycerols &gt; phosphatidylethanolamines &gt; phosphatidylcholines &gt; phosphatidylserines. May play a role in lipid mediator production in inflammatory conditions, by providing arachidonic acid to downstream cyclooxygenases and lipoxygenases. This chain is Group IIF secretory phospholipase A2 (Pla2g2f), found in Mus musculus (Mouse).